Reading from the N-terminus, the 269-residue chain is L-cystine-binding protein TcyJ (269 aa).

An N-terminal signal peptide occupies residues 1 to 20; sequence MNKRKGLVLLLSVFALLGGG. Residue Cys-21 is the site of N-palmitoyl cysteine attachment. Cys-21 is lipidated: S-diacylglycerol cysteine.

It belongs to the bacterial solute-binding protein 3 family. The complex is composed of two ATP-binding proteins (TcyN), two transmembrane proteins (TcyL and TcyM) and two solute-binding proteins (TcyJ and TcyK).

The protein localises to the cell membrane. In terms of biological role, part of the ABC transporter complex TcyJKLMN involved in L-cystine import. Is also involved in cystathionine, djenkolate, and S-methylcysteine transport. The chain is L-cystine-binding protein TcyJ (tcyJ) from Bacillus subtilis (strain 168).